Consider the following 87-residue polypeptide: Small ribosomal subunit protein bS20 (87 aa).

Basic residues predominate over residues 1–27; it reads MANIKSAKKRALQSERRRQHNASRRSM. Residues 1 to 31 are disordered; that stretch reads MANIKSAKKRALQSERRRQHNASRRSMTRTS.

Belongs to the bacterial ribosomal protein bS20 family.

Functionally, binds directly to 16S ribosomal RNA. This chain is Small ribosomal subunit protein bS20, found in Pseudoalteromonas atlantica (strain T6c / ATCC BAA-1087).